The sequence spans 554 residues: Glucose-6-phosphate isomerase (554 aa).

The Proton donor role is filled by E358. Residues H389 and K515 contribute to the active site. Residues 527–540 (ADNSPAPQSDSSTD) are compositionally biased toward polar residues. The interval 527–554 (ADNSPAPQSDSSTDALVRRYRSERGRTS) is disordered. Positions 542-554 (LVRRYRSERGRTS) are enriched in basic and acidic residues.

This sequence belongs to the GPI family.

Its subcellular location is the cytoplasm. The enzyme catalyses alpha-D-glucose 6-phosphate = beta-D-fructose 6-phosphate. It functions in the pathway carbohydrate biosynthesis; gluconeogenesis. Its pathway is carbohydrate degradation; glycolysis; D-glyceraldehyde 3-phosphate and glycerone phosphate from D-glucose: step 2/4. In terms of biological role, catalyzes the reversible isomerization of glucose-6-phosphate to fructose-6-phosphate. The sequence is that of Glucose-6-phosphate isomerase from Mycobacterium avium (strain 104).